A 955-amino-acid polypeptide reads, in one-letter code: Centrosomal protein of 112 kDa (955 aa).

Residues 277 to 954 (QKHDADVQKI…QEELTTYQGR (678 aa)) are a coiled coil.

It is found in the cytoplasm. It localises to the cytoskeleton. Its subcellular location is the microtubule organizing center. The protein localises to the centrosome. The chain is Centrosomal protein of 112 kDa (CEP112) from Homo sapiens (Human).